A 360-amino-acid chain; its full sequence is Phenylalanine--tRNA ligase alpha subunit (360 aa).

Position 260 (Glu-260) interacts with Mg(2+).

This sequence belongs to the class-II aminoacyl-tRNA synthetase family. Phe-tRNA synthetase alpha subunit type 1 subfamily. Tetramer of two alpha and two beta subunits. Mg(2+) is required as a cofactor.

The protein resides in the cytoplasm. The enzyme catalyses tRNA(Phe) + L-phenylalanine + ATP = L-phenylalanyl-tRNA(Phe) + AMP + diphosphate + H(+). This Paracoccus denitrificans (strain Pd 1222) protein is Phenylalanine--tRNA ligase alpha subunit.